Here is a 92-residue protein sequence, read N- to C-terminus: YcgL domain-containing protein Sbal_1869 (92 aa).

A YcgL domain is found at methionine 1 to lysine 85.

This is YcgL domain-containing protein Sbal_1869 from Shewanella baltica (strain OS155 / ATCC BAA-1091).